The sequence spans 479 residues: Sucrose-6-phosphate hydrolase (479 aa).

Substrate-binding positions include 44–47 (LLND), Q63, 106–107 (YS), 166–167 (RD), and E223. D47 is an active-site residue.

Belongs to the glycosyl hydrolase 32 family.

It localises to the cytoplasm. The catalysed reaction is Hydrolysis of terminal non-reducing beta-D-fructofuranoside residues in beta-D-fructofuranosides.. The protein operates within glycan biosynthesis; sucrose metabolism. The polypeptide is Sucrose-6-phosphate hydrolase (scrB) (Streptococcus mutans serotype c (strain ATCC 700610 / UA159)).